A 528-amino-acid polypeptide reads, in one-letter code: MNSTSTSDVIGRRVEVNGEHATVRFSGLVPPVAGLWLGVEWDNPERGKHDGSHEGTVYFKCRHPTAGSFIRPHKVNFGVDFLTAIKNRYVLEDEPKEEETEQIVIIGNKPVETIGFDSVIKQQSQLSKLQDVSLRNCAVNGAGDKGEIAKACPNIRSIDLSKNLLSSWEEVIDIADQLKHLEVLNLSENKLTSPSSSPSPTGTFPTLKVLVLNRTGVTWAEVLRCASGWPVLEKLYLESNNIIISERPTDVLQTVKLLDLSSNQLIDENQLFLIAYLPRLEQLILSDIGISSIHFPDAGIGCKTSMFPSLQYLVLNDNQIAQWSFMNELDKLQSLHALSCTRNPLTEGSKDAQTTRQFIIARIGQLRTLNKCAIEPEERRGAELDYRKAFGNEWKKAGGHQDPEKNRPNEEFLAAHPRYQALCLKYGAPEDGELKTQQPFLLKNQLLTLKIKYPNQHDQKVIEKQLPDSMTVQKVKGLLSRLLKVPVSELLLSYESPKMPGKEVELENDLQPLRFYSVENGDCLLVRW.

The CAP-Gly domain maps to 27–71; that stretch reads GLVPPVAGLWLGVEWDNPERGKHDGSHEGTVYFKCRHPTAGSFIR. LRR repeat units lie at residues 152–176, 178–206, 207–229, 231–253, 254–274, 279–300, and 309–330; these read CPNI…DIAD, LKHL…TFPT, LKVL…ASGW, VLEK…DVLQ, TVKL…LFLI, RLEQ…DAGI, and SLQY…NELD. Positions 343-385 constitute an LRRCT domain; that stretch reads NPLTEGSKDAQTTRQFIIARIGQLRTLNKCAIEPEERRGAELD. Lys-464 bears the N6-acetyllysine mark. Ser-496 is subject to Phosphoserine.

This sequence belongs to the TBCE family. As to quaternary structure, supercomplex made of cofactors A to E. Cofactors A and D function by capturing and stabilizing tubulin in a quasi-native conformation. Cofactor E binds to the cofactor D-tubulin complex; interaction with cofactor C then causes the release of tubulin polypeptides that are committed to the native state. Cofactors B and E can form a heterodimer which binds to alpha-tubulin and enhances their ability to dissociate tubulin heterodimers. Interacts with TBCD.

The protein localises to the cytoplasm. It localises to the cytoskeleton. Functionally, tubulin-folding protein; involved in the second step of the tubulin folding pathway and in the regulation of tubulin heterodimer dissociation. Required for correct organization of microtubule cytoskeleton and mitotic splindle, and maintenance of the neuronal microtubule network. The protein is Tubulin-specific chaperone E (TBCE) of Bos taurus (Bovine).